A 201-amino-acid polypeptide reads, in one-letter code: Translation initiation factor IF-3 (201 aa).

Belongs to the IF-3 family. Monomer.

Its subcellular location is the cytoplasm. Its function is as follows. IF-3 binds to the 30S ribosomal subunit and shifts the equilibrium between 70S ribosomes and their 50S and 30S subunits in favor of the free subunits, thus enhancing the availability of 30S subunits on which protein synthesis initiation begins. The chain is Translation initiation factor IF-3 from Mycoplasma pneumoniae (strain ATCC 29342 / M129 / Subtype 1) (Mycoplasmoides pneumoniae).